A 27-amino-acid polypeptide reads, in one-letter code: GFGALFKFLAKKVAKTVAKQVAKKQME.

Glu27 is modified (glutamic acid 1-amide).

As to expression, expressed by the venom gland.

The protein resides in the secreted. This is Cupiennin-3d from Cupiennius salei (American wandering spider).